A 188-amino-acid chain; its full sequence is Probable nicotinate-nucleotide adenylyltransferase (188 aa).

The protein belongs to the NadD family.

The enzyme catalyses nicotinate beta-D-ribonucleotide + ATP + H(+) = deamido-NAD(+) + diphosphate. It participates in cofactor biosynthesis; NAD(+) biosynthesis; deamido-NAD(+) from nicotinate D-ribonucleotide: step 1/1. Catalyzes the reversible adenylation of nicotinate mononucleotide (NaMN) to nicotinic acid adenine dinucleotide (NaAD). This chain is Probable nicotinate-nucleotide adenylyltransferase, found in Listeria monocytogenes serovar 1/2a (strain ATCC BAA-679 / EGD-e).